Consider the following 208-residue polypeptide: Small ribosomal subunit protein eS8 (208 aa).

The protein belongs to the eukaryotic ribosomal protein eS8 family. As to quaternary structure, component of the small ribosomal subunit. Identified in a IGF2BP1-dependent mRNP granule complex containing untranslated mRNAs. Part of the small subunit (SSU) processome, composed of more than 70 proteins and the RNA chaperone small nucleolar RNA (snoRNA) U3.

It localises to the cytoplasm. The protein localises to the membrane. The protein resides in the nucleus. Its subcellular location is the nucleolus. In terms of biological role, component of the small ribosomal subunit. The ribosome is a large ribonucleoprotein complex responsible for the synthesis of proteins in the cell. Part of the small subunit (SSU) processome, first precursor of the small eukaryotic ribosomal subunit. During the assembly of the SSU processome in the nucleolus, many ribosome biogenesis factors, an RNA chaperone and ribosomal proteins associate with the nascent pre-rRNA and work in concert to generate RNA folding, modifications, rearrangements and cleavage as well as targeted degradation of pre-ribosomal RNA by the RNA exosome. This is Small ribosomal subunit protein eS8 (rps-8) from Caenorhabditis elegans.